The sequence spans 158 residues: 2-C-methyl-D-erythritol 2,4-cyclodiphosphate synthase (158 aa).

Positions 8 and 10 each coordinate a divalent metal cation. Residues 8–10 (DSH) and 34–35 (HS) contribute to the 4-CDP-2-C-methyl-D-erythritol 2-phosphate site. His42 serves as a coordination point for a divalent metal cation. Residues 56–58 (DIG), 61–65 (FPDND), and Arg142 each bind 4-CDP-2-C-methyl-D-erythritol 2-phosphate.

Belongs to the IspF family. In terms of assembly, homotrimer. It depends on a divalent metal cation as a cofactor.

It carries out the reaction 4-CDP-2-C-methyl-D-erythritol 2-phosphate = 2-C-methyl-D-erythritol 2,4-cyclic diphosphate + CMP. Its pathway is isoprenoid biosynthesis; isopentenyl diphosphate biosynthesis via DXP pathway; isopentenyl diphosphate from 1-deoxy-D-xylulose 5-phosphate: step 4/6. In terms of biological role, involved in the biosynthesis of isopentenyl diphosphate (IPP) and dimethylallyl diphosphate (DMAPP), two major building blocks of isoprenoid compounds. Catalyzes the conversion of 4-diphosphocytidyl-2-C-methyl-D-erythritol 2-phosphate (CDP-ME2P) to 2-C-methyl-D-erythritol 2,4-cyclodiphosphate (ME-CPP) with a corresponding release of cytidine 5-monophosphate (CMP). The sequence is that of 2-C-methyl-D-erythritol 2,4-cyclodiphosphate synthase from Brachyspira hyodysenteriae (strain ATCC 49526 / WA1).